A 358-amino-acid polypeptide reads, in one-letter code: Peptide chain release factor 1 (358 aa).

N5-methylglutamine is present on Gln234.

The protein belongs to the prokaryotic/mitochondrial release factor family. Post-translationally, methylated by PrmC. Methylation increases the termination efficiency of RF1.

It is found in the cytoplasm. In terms of biological role, peptide chain release factor 1 directs the termination of translation in response to the peptide chain termination codons UAG and UAA. This Leifsonia xyli subsp. xyli (strain CTCB07) protein is Peptide chain release factor 1.